A 282-amino-acid polypeptide reads, in one-letter code: 2-dehydro-3-deoxyphosphooctonate aldolase (282 aa).

Belongs to the KdsA family.

Its subcellular location is the cytoplasm. It catalyses the reaction D-arabinose 5-phosphate + phosphoenolpyruvate + H2O = 3-deoxy-alpha-D-manno-2-octulosonate-8-phosphate + phosphate. It participates in carbohydrate biosynthesis; 3-deoxy-D-manno-octulosonate biosynthesis; 3-deoxy-D-manno-octulosonate from D-ribulose 5-phosphate: step 2/3. It functions in the pathway bacterial outer membrane biogenesis; lipopolysaccharide biosynthesis. The polypeptide is 2-dehydro-3-deoxyphosphooctonate aldolase (Bradyrhizobium diazoefficiens (strain JCM 10833 / BCRC 13528 / IAM 13628 / NBRC 14792 / USDA 110)).